Reading from the N-terminus, the 194-residue chain is Small ribosomal subunit protein uS7 (194 aa).

It belongs to the universal ribosomal protein uS7 family. As to quaternary structure, part of the 30S ribosomal subunit.

One of the primary rRNA binding proteins, it binds directly to 16S rRNA where it nucleates assembly of the head domain of the 30S subunit. Is located at the subunit interface close to the decoding center. This Sulfurisphaera tokodaii (strain DSM 16993 / JCM 10545 / NBRC 100140 / 7) (Sulfolobus tokodaii) protein is Small ribosomal subunit protein uS7.